Here is a 417-residue protein sequence, read N- to C-terminus: Tryptophan synthase beta chain (417 aa).

Lys110 is subject to N6-(pyridoxal phosphate)lysine.

The protein belongs to the TrpB family. In terms of assembly, tetramer of two alpha and two beta chains. Requires pyridoxal 5'-phosphate as cofactor.

The catalysed reaction is (1S,2R)-1-C-(indol-3-yl)glycerol 3-phosphate + L-serine = D-glyceraldehyde 3-phosphate + L-tryptophan + H2O. It participates in amino-acid biosynthesis; L-tryptophan biosynthesis; L-tryptophan from chorismate: step 5/5. The beta subunit is responsible for the synthesis of L-tryptophan from indole and L-serine. This Prochlorococcus marinus (strain NATL2A) protein is Tryptophan synthase beta chain.